A 638-amino-acid polypeptide reads, in one-letter code: MTNSSPRVKRRTDTQYLHSVSSKLPKVDFDTNNEEFFEEEFEIYDPFYRAELPCPKPSLSISKHSIAKVPSNVNKRLELQLLLTSGTFLPNSRPYLSERVRKHTHLLSNSITGDDKPSLIHVDFTPEECFILQEAKLKFGPVNSVQFNDAYSTHISPKLPGRAYEDCQKFEIDNPSLSPVDKHGAIILRTYKKNKKLLPDYLKSFYNAGSSYFQREQVHQLMDGESVFFLKPWKHFNETSGDTVCVAYNPLCEKFALGSTAQDGAYNRLGNLWIGDFHSETIQSLESHYKLNQVGEKEYSTISDLCFSKGNLFLYTGAFDNAVKVWDMEGNLCGIFNAPTDYIHKLALSDDDLLAVACKNGYGYLLSTDNSTGEILTSANLIYPEALEKGYSASLIEFSNFLGRSSDKVIIGYDSFHTSNNRGCLALFDASTASFVQKFNTADEAFTSLYMHPSQVGFVASSNTLSNGRVYYLDTRMYKVCLNFTTTQKDINHATISNSGILVTSSGTDNQTFVWDSRKPDKPLSLLKHGKTKMIHFDGANEEEVDAGINMAQWQPKGNLFVTGGSDGIVKVWDLRLNNPFIQNFTEMNSAITYGGFSEDASKLTVCCVGGDVNMYSLGNDNGNKFGEFRIIENRLLT.

WD repeat units lie at residues 297 to 336, 486 to 525, 544 to 583, and 587 to 626; these read KEYSTISDLCFSKGNLFLYTGAFDNAVKVWDMEGNLCGIF, TTQKDINHATISNSGILVTSSGTDNQTFVWDSRKPDKPLS, EVDAGINMAQWQPKGNLFVTGGSDGIVKVWDLRLNNPFIQ, and EMNSAITYGGFSEDASKLTVCCVGGDVNMYSLGNDNGNKF.

In terms of assembly, component of the Clr4 methyltransferase complex (ClrC) composed of at least clr4, rik1, pcu4, rbx1, raf1 and raf2. The cullin pcu4, rik1, raf1, raf2 and the ring-box protein rbx1 are components of an E3 ubiquitin ligase, whose activity is essential for heterochromatin assembly. Interacts with nup189.

It localises to the cytoplasm. The protein resides in the nucleus. It is found in the chromosome. Its function is as follows. Component of the Clr4 methyltransferase complex (ClrC) which contributes to the establishment of heterochromatin by specifically methylating histone H3 to form H3K9me. ClrC preferentially ubiquitylates H3K14 and ClrC-mediated H3 ubiquitination promotes clr4 methyltransferase activity for the methylation of H3K9. H3K9me represents a specific tag for epigenetic transcriptional repression by recruiting swi6/HP1 to methylated histones which leads to transcriptional silencing within centromeric heterochromatin, telomeric regions and at the silent mating-type loci. Has a role in both mitotic and meiotic chromosome segregation. This Schizosaccharomyces pombe (strain 972 / ATCC 24843) (Fission yeast) protein is Rik1-associated factor 1 (raf1).